The primary structure comprises 259 residues: Imidazole glycerol phosphate synthase subunit HisF (259 aa).

Residues Asp-11 and Asp-130 contribute to the active site.

The protein belongs to the HisA/HisF family. In terms of assembly, heterodimer of HisH and HisF.

The protein resides in the cytoplasm. The enzyme catalyses 5-[(5-phospho-1-deoxy-D-ribulos-1-ylimino)methylamino]-1-(5-phospho-beta-D-ribosyl)imidazole-4-carboxamide + L-glutamine = D-erythro-1-(imidazol-4-yl)glycerol 3-phosphate + 5-amino-1-(5-phospho-beta-D-ribosyl)imidazole-4-carboxamide + L-glutamate + H(+). It functions in the pathway amino-acid biosynthesis; L-histidine biosynthesis; L-histidine from 5-phospho-alpha-D-ribose 1-diphosphate: step 5/9. In terms of biological role, IGPS catalyzes the conversion of PRFAR and glutamine to IGP, AICAR and glutamate. The HisF subunit catalyzes the cyclization activity that produces IGP and AICAR from PRFAR using the ammonia provided by the HisH subunit. This is Imidazole glycerol phosphate synthase subunit HisF from Nitratidesulfovibrio vulgaris (strain DP4) (Desulfovibrio vulgaris).